The chain runs to 61 residues: UPF0370 protein Spro_3503 (61 aa).

The helical transmembrane segment at 3–23 (WLADYWWIILLILVGMIISGI) threads the bilayer. The segment covering 38-48 (KPELPPHRDNN) has biased composition (basic and acidic residues). Residues 38-61 (KPELPPHRDNNAEWDDDDDWPKKK) are disordered. Over residues 49–61 (AEWDDDDDWPKKK) the composition is skewed to acidic residues.

The protein belongs to the UPF0370 family.

The protein resides in the cell membrane. The polypeptide is UPF0370 protein Spro_3503 (Serratia proteamaculans (strain 568)).